A 569-amino-acid polypeptide reads, in one-letter code: Serine/threonine-protein kinase gad8 (569 aa).

A disordered region spans residues Gly19–Val63. Residues Leu31–Arg42 show a composition bias toward low complexity. Residues Lys43–Ser58 are compositionally biased toward basic and acidic residues. The 158-residue stretch at Ser45–Val202 folds into the C2 domain. Residues Phe230–Phe485 enclose the Protein kinase domain. ATP is bound by residues Val236–Val244 and Lys259. The Proton acceptor role is filled by Asp353. Thr387 bears the Phosphothreonine; by ksg1 mark. The AGC-kinase C-terminal domain occupies Asp486 to Asp557. 2 positions are modified to phosphoserine; by TORC2: Ser527 and Ser546.

Belongs to the protein kinase superfamily. AGC Ser/Thr protein kinase family. Post-translationally, phosphorylated by ksg1 and target of rapamycin complex 2 (TORC2), affecting the kinase activity of gad8 in a nutrient-dependent manner.

The enzyme catalyses L-seryl-[protein] + ATP = O-phospho-L-seryl-[protein] + ADP + H(+). It carries out the reaction L-threonyl-[protein] + ATP = O-phospho-L-threonyl-[protein] + ADP + H(+). Involved in a signaling module for sexual development and cell growth under stressed conditions. Required for G1 arrest under nitrogen starvation and for growth at high temperature and osmolarity. In Schizosaccharomyces pombe (strain 972 / ATCC 24843) (Fission yeast), this protein is Serine/threonine-protein kinase gad8.